The primary structure comprises 281 residues: MDLWLKEGQISDAVMTYKIKETLVRKKTEYQDLAIVDTYALGRMLVLDGIVQTSIKDEYVYHEMITHIPLYTHPNPKKVLVVGGGDGGTIREILKHPSVEKAVLCEIDEEVVKECKKHLPEISNNALEDSRCEVFIGDGIKYVNEHKNEFDVVIIDSTDPFGAAEGLFGGSFYGKISECLTEDGIFVAQTETPFYLPEIVKRVYDDSKAVFPVTKLFMAAIPTYPSGYWSFTIGSKKHDPEKAPVPEVLPFETKYYTPRLHSASFVLPKFVENLIFANISE.

The PABS domain maps to 2 to 236; it reads DLWLKEGQIS…GYWSFTIGSK (235 aa). Position 31 (Gln-31) interacts with S-methyl-5'-thioadenosine. Positions 62 and 86 each coordinate spermidine. S-methyl-5'-thioadenosine is bound by residues Glu-106 and 138–139; that span reads DG. Asp-156 functions as the Proton acceptor in the catalytic mechanism. Position 156-159 (156-159) interacts with spermidine; sequence DSTD.

Belongs to the spermidine/spermine synthase family. As to quaternary structure, homodimer or homotetramer.

The protein localises to the cytoplasm. It catalyses the reaction S-adenosyl 3-(methylsulfanyl)propylamine + putrescine = S-methyl-5'-thioadenosine + spermidine + H(+). It functions in the pathway amine and polyamine biosynthesis; spermidine biosynthesis; spermidine from putrescine: step 1/1. In terms of biological role, catalyzes the irreversible transfer of a propylamine group from the amino donor S-adenosylmethioninamine (decarboxy-AdoMet) to putrescine (1,4-diaminobutane) to yield spermidine. The polypeptide is Polyamine aminopropyltransferase (Clostridium tetani (strain Massachusetts / E88)).